The primary structure comprises 203 residues: MIGFLKFALIGTVLLGVANGASVATASAKGSNCTVQDGYAALMCLVRLSDFAEKVDNLDMNDKTKLKEFKRSCDSLHSCYSNLNCTTKSDDEKDKYVESIKQYCDAVVYVSDGFSKCSDKLNEKKSKCFDDWDPIPNKIHLEEDEAKIEKIKNEACKTYFGKDDCMKKEITETCGKEEWDSFRKQFVNLSGGLVSKCDFSRFE.

The signal sequence occupies residues 1 to 20; sequence MIGFLKFALIGTVLLGVANG. Asparagine 32, asparagine 84, and asparagine 188 each carry an N-linked (GlcNAc...) asparagine glycan.

This sequence belongs to the UPF0376 family.

It localises to the secreted. This is Excretory canal abnormal exc-13 from Caenorhabditis elegans.